The primary structure comprises 296 residues: Beta-lactamase (296 aa).

The N-terminal stretch at 1–21 (MKAYFIAILTLFTCIATVVRA) is a signal peptide. Ser-66 functions as the Acyl-ester intermediate in the catalytic mechanism. 235 to 237 (KTG) contributes to the substrate binding site.

The protein belongs to the class-A beta-lactamase family.

It carries out the reaction a beta-lactam + H2O = a substituted beta-amino acid. In Bacteroides uniformis, this protein is Beta-lactamase (cblA).